Reading from the N-terminus, the 459-residue chain is Prenyltransferase penI (459 aa).

L-tryptophan-binding positions include 107-108 (VV) and glutamate 111. The substrate site is built by arginine 126, arginine 276, lysine 278, tyrosine 280, and tyrosine 384.

It belongs to the tryptophan dimethylallyltransferase family.

It catalyses the reaction quinolinone B + dimethylallyl diphosphate = peniprequinolone + diphosphate. It participates in secondary metabolite biosynthesis. It functions in the pathway alkaloid biosynthesis. Its pathway is mycotoxin biosynthesis. In terms of biological role, prenyltransferase; part of the gene cluster that mediates the biosynthesis of penigequinolones, potent insecticidal alkaloids that contain a highly modified 10-carbon prenyl group. The first stage is catalyzed by the nonribosomal peptide synthetase penN that condenses anthranilic acid and O-methyl-L-tyrosine to produce 4'-methoxycyclopeptin. 4'-methoxycyclopeptin is then converted to 4'-methoxydehydrocyclopeptin by the ketoglutarate-dependent dioxygenase penM through dehydrogenation to form a double bond between C-alpha and C-beta of the O-methyltyrosine side chain. PenM also converts its first product methoxydehydrocyclopeptin to 4'-methoxycyclopenin. The following conversion of 4'methoxycyclopenin into 4'-methoxyviridicatin is catalyzed by the cyclopenase penL. 4'-methoxyviridicatin is the precursor of quinolone natural products, and is further converted to quinolinone B. The prenyltransferase penI then catalyzes the canonical Friedel-Crafts alkylation of quinolinone B with dimethylallyl cation to yield dimethylallyl quinolone, which is subjected to FAD-dependent dehydrogenation by the FAD-linked oxidoreductase penH to yield conjugated aryl diene. The delta(3') double bond then serves as the site of the second alkylation with DMAPP catalyzed by the prenyltransferase penG to yield a carbenium ion intermediate, which can be attacked by H(2)O to yield a styrenyl quinolone containing a C3'-hydroxyprenyl chain, or undergo cyclization to yield yaequinolones J1 and J2. The conversion of the styrenyl quinolone into the tetrahydrofuran-containing yaequinolone C is performed by the FAD-dependent monooxygenase penE and involves epoxidation of the terminal C7'-C8' olefin, followed by epoxide ring opening initiated by the C3' hydroxyl group. The predicted cysteine hydrolase penJ acts as an epoxide hydrolase that enhances the rate of the 5-exo-tet cyclization step, increasing the yield of yaequinolone C. PenF catalyzes the cationic rearrangement of the epoxide formed by penE (before ring opening to produce yaequinolone C) into yaequinolone D. Finally, the short-chain dehydrogenase/reductase (SDR)-like reductase penD, catalyzes both the dehydration of yaequinolone D and the reduction of the resulting oxonium to yield penigequinolone. This is Prenyltransferase penI from Penicillium thymicola.